The sequence spans 293 residues: Acetylglutamate kinase (293 aa).

Residues 68 to 69 (GG), arginine 90, and asparagine 189 each bind substrate.

The protein belongs to the acetylglutamate kinase family. ArgB subfamily.

The protein resides in the cytoplasm. It catalyses the reaction N-acetyl-L-glutamate + ATP = N-acetyl-L-glutamyl 5-phosphate + ADP. It functions in the pathway amino-acid biosynthesis; L-arginine biosynthesis; N(2)-acetyl-L-ornithine from L-glutamate: step 2/4. Its function is as follows. Catalyzes the ATP-dependent phosphorylation of N-acetyl-L-glutamate. This Mycobacterium ulcerans (strain Agy99) protein is Acetylglutamate kinase.